The sequence spans 714 residues: MADRVNASQGAAAAPTANGPGGVRNVVLVGPSGGGKTTLIEALLVAAKVLSRPGSVTEGTTVCDFDEAEIRQQRSVGLAVASLAYDGIKVNLVDTPGYADFVGELRAGLRAADCALFVIAANEGVDEPTKSLWQECSQVGMPRAVVITKLDHARANYREALTAAQDAFGDKVLPLYLPSGDGLIGLLSQALYEYADGKRTTRTPAESDTERIEEARGALIEGIIEESEDESLMERYLGGETIDESVLIQDLEKAVARGSFFPVIPVCSSTGVGTLELLEVATRGFPSPMEHPLPEVFTPQGVPHAELACDNDAPLLAEVVKTTSDPYVGRVSLVRVFSGTIRPDTTVHVSGHFSSFFGGGTSNTHPDHDEDERIGVLSFPLGKQQRPAAAVVAGDICAIGKLSRAETGDTLSDKAEPLVLKPWTMPEPLLPIAIAAHAKTDEDKLSVGLGRLAAEDPTLRIEQNQETHQVVLWCMGEAHAGVVLDTLANRYGVSVDTIELRVPLRETFAGNAKGHGRHIKQSGGHGQYGVCDIEVEPLPEGSGFEFLDKVVGGAVPRQFIPSVEKGVRAQMDKGVHAGYPVVDIRVTLLDGKAHSVDSSDFAFQMAGALALREAAAATKVILLEPIDEISVLVPDDFVGAVLGDLSSRRGRVLGTETAGHDRTVIKAEVPQVELTRYAIDLRSLAHGAASFTRSFARYEPMPESAAARVKAGAG.

The tr-type G domain occupies 21–289; the sequence is GGVRNVVLVG…VATRGFPSPM (269 aa). Residues 30–37 are G1; the sequence is GPSGGGKT. Residue 30 to 37 coordinates GTP; that stretch reads GPSGGGKT. Residues 73–77 form a G2 region; sequence QRSVG. Residues 94-97 are G3; that stretch reads DTPG. GTP contacts are provided by residues 94 to 98 and 148 to 151; these read DTPGY and TKLD. The interval 148-151 is G4; that stretch reads TKLD. Residues 267 to 269 are G5; that stretch reads CSS.

This sequence belongs to the TRAFAC class translation factor GTPase superfamily. Classic translation factor GTPase family. EF-G/EF-2 subfamily.

This is Elongation factor G-like protein from Mycobacterium tuberculosis (strain CDC 1551 / Oshkosh).